The sequence spans 313 residues: Putative adhesin P1-like protein MPN_202 (313 aa).

A compositionally biased stretch (low complexity) spans 1-16 (MGSQNQGSTTTTSAGN). The segment at 1 to 44 (MGSQNQGSTTTTSAGNPDSLVTDKVDQKGQVQTSGQNLSDTNYT) is disordered. Residues 29-44 (GQVQTSGQNLSDTNYT) are compositionally biased toward polar residues.

Belongs to the adhesin P1 family.

This Mycoplasma pneumoniae (strain ATCC 29342 / M129 / Subtype 1) (Mycoplasmoides pneumoniae) protein is Putative adhesin P1-like protein MPN_202.